A 351-amino-acid chain; its full sequence is Phenylalanine--tRNA ligase alpha subunit (351 aa).

Glu-266 lines the Mg(2+) pocket.

Belongs to the class-II aminoacyl-tRNA synthetase family. Phe-tRNA synthetase alpha subunit type 1 subfamily. As to quaternary structure, tetramer of two alpha and two beta subunits. It depends on Mg(2+) as a cofactor.

Its subcellular location is the cytoplasm. The catalysed reaction is tRNA(Phe) + L-phenylalanine + ATP = L-phenylalanyl-tRNA(Phe) + AMP + diphosphate + H(+). The sequence is that of Phenylalanine--tRNA ligase alpha subunit from Anaplasma marginale (strain St. Maries).